The primary structure comprises 435 residues: GTPase Obg (435 aa).

An Obg domain is found at 6–164 (ADFVDRVKIF…RWLELELKIL (159 aa)). An OBG-type G domain is found at 165–335 (ADVGLVGYPN…LVSKLASIVR (171 aa)). GTP contacts are provided by residues 171 to 178 (GYPNVGKS), 196 to 200 (FTTLI), 217 to 220 (DIPG), 287 to 290 (NKID), and 316 to 318 (SAL). 2 residues coordinate Mg(2+): Ser-178 and Thr-198. Positions 357–435 (RRLPEKFHLE…IGDFEFEYRE (79 aa)) constitute an OCT domain.

It belongs to the TRAFAC class OBG-HflX-like GTPase superfamily. OBG GTPase family. In terms of assembly, monomer. The cofactor is Mg(2+).

It is found in the cytoplasm. Functionally, an essential GTPase which binds GTP, GDP and possibly (p)ppGpp with moderate affinity, with high nucleotide exchange rates and a fairly low GTP hydrolysis rate. Plays a role in control of the cell cycle, stress response, ribosome biogenesis and in those bacteria that undergo differentiation, in morphogenesis control. In Thermotoga sp. (strain RQ2), this protein is GTPase Obg.